The sequence spans 434 residues: Putative nuclease OPG089 (434 aa).

Belongs to the XPG/RAD2 endonuclease family. FEN1 subfamily. The cofactor is Mg(2+).

Its subcellular location is the virion. Its function is as follows. Putative nuclease that seems to be required for double-strand break repair, homologous recombination, and production of full-length viral genomic DNA. The polypeptide is Putative nuclease OPG089 (OPG089) (Monkeypox virus).